Consider the following 311-residue polypeptide: 4-hydroxy-tetrahydrodipicolinate synthase (311 aa).

Pyruvate is bound at residue threonine 51. The active-site Proton donor/acceptor is the tyrosine 140. Catalysis depends on lysine 168, which acts as the Schiff-base intermediate with substrate. A pyruvate-binding site is contributed by isoleucine 209.

This sequence belongs to the DapA family. Homotetramer; dimer of dimers.

The protein localises to the cytoplasm. It carries out the reaction L-aspartate 4-semialdehyde + pyruvate = (2S,4S)-4-hydroxy-2,3,4,5-tetrahydrodipicolinate + H2O + H(+). It functions in the pathway amino-acid biosynthesis; L-lysine biosynthesis via DAP pathway; (S)-tetrahydrodipicolinate from L-aspartate: step 3/4. Functionally, catalyzes the condensation of (S)-aspartate-beta-semialdehyde [(S)-ASA] and pyruvate to 4-hydroxy-tetrahydrodipicolinate (HTPA). In Streptococcus gordonii (strain Challis / ATCC 35105 / BCRC 15272 / CH1 / DL1 / V288), this protein is 4-hydroxy-tetrahydrodipicolinate synthase.